A 311-amino-acid chain; its full sequence is Probable dihydroorotate dehydrogenase A (fumarate) (311 aa).

Residues Lys45, 69–73 (NSMGL), and Asn128 each bind substrate. Position 45–46 (45–46 (KT)) interacts with FMN. Asn128 is a binding site for FMN. Residue Cys131 is the Nucleophile of the active site. FMN is bound by residues Lys165 and Val193. 194 to 195 (NS) provides a ligand contact to substrate. FMN is bound by residues Gly220, 248-249 (GG), and 270-271 (GT).

The protein belongs to the dihydroorotate dehydrogenase family. Type 1 subfamily. In terms of assembly, homodimer. Requires FMN as cofactor.

Its subcellular location is the cytoplasm. It carries out the reaction (S)-dihydroorotate + fumarate = orotate + succinate. The protein operates within pyrimidine metabolism; UMP biosynthesis via de novo pathway. Its function is as follows. Catalyzes the conversion of dihydroorotate to orotate with fumarate as the electron acceptor. In Streptococcus pneumoniae serotype 4 (strain ATCC BAA-334 / TIGR4), this protein is Probable dihydroorotate dehydrogenase A (fumarate) (pyrDA).